The chain runs to 138 residues: Homeobox protein HD-11 (138 aa).

The homeobox DNA-binding region spans 30–89 (CTGKQMRKTRLQTCVLNRIFEISRFPSSKTIVDLALLINVHPKSIQKWFQNTRQAIRKKG).

The protein localises to the nucleus. In Encephalitozoon cuniculi (strain GB-M1) (Microsporidian parasite), this protein is Homeobox protein HD-11 (HD-11).